A 769-amino-acid chain; its full sequence is Intron Large complex component GCFC2 (769 aa).

Disordered stretches follow at residues 1–122 and 134–212; these read MALR…PIVE and RKRE…DENQ. Phosphoserine occurs at positions 16, 17, 19, and 85. Thr-86 carries the post-translational modification Phosphothreonine. Residues Ser-118 and Ser-169 each carry the phosphoserine modification. Residues 190–201 are compositionally biased toward basic and acidic residues; it reads RMAEETSIRSEE. The segment covering 202-212 has biased composition (acidic residues); it reads SSEESQEDENQ. Phosphoserine is present on residues Ser-203 and Ser-206. Positions 256–308 form a coiled coil; the sequence is NLEIIKKQLNNRLTLLQESHRSHQREYEKYEQDIKSSKTAIQNLESASDHAQN.

Belongs to the GCF family. In terms of assembly, found in the Intron Large (IL) complex, a post-mRNA release spliceosomal complex containing the excised intron, U2, U5 and U6 snRNPs, and splicing factors. Interacts with TFIP11 and DHX15.

The protein localises to the nucleus. Its subcellular location is the nucleoplasm. It localises to the nucleolus. Functionally, involved in pre-mRNA splicing through regulating spliceosome C complex formation. May play a role during late-stage splicing events and turnover of excised introns. The protein is Intron Large complex component GCFC2 (Gcfc2) of Mus musculus (Mouse).